Consider the following 1133-residue polypeptide: Guanine nucleotide-binding protein G(s) subunit alpha isoforms XLas (1133 aa).

Disordered stretches follow at residues 1-195 (MGMF…PEAL), 322-552 (DDTA…VPGA), 611-648 (SASA…WPDK), and 724-744 (RSRS…RKQM). Residues 31 to 48 (LEAPGAAAPGAGAGPAEE) show a composition bias toward low complexity. The segment covering 347–362 (DKSECAERPPVEREAA) has biased composition (basic and acidic residues). 5 stretches are compositionally biased toward low complexity: residues 391–404 (PEAM…AAQA), 459–471 (GGAA…TPAE), 482–498 (AEPA…ESAS), 515–525 (ATLAEPAARAA), and 535–552 (RAVP…VPGA). The segment covering 633–643 (PPTPRPPPRPT) has biased composition (pro residues). Over residues 732–744 (KAKDPMEERRKQM) the composition is skewed to basic and acidic residues. Residues 737-761 (MEERRKQMRKEAIEMREQKRADKKR) adopt a coiled-coil conformation. Residues 778-1133 (CTHRLLLLGA…RMHLRQYELL (356 aa)) form the G-alpha domain. The segment at 781–794 (RLLLLGAGESGKST) is G1 motif. GTP is bound at residue 786 to 794 (GAGESGKST). Serine 793 is a Mg(2+) binding site. The segment at 807 to 828 (FNGEGGEEDPQAARSNSDGEKA) is disordered. Residues 935–943 (DLLRCRVLT) are G2 motif. GTP contacts are provided by residues 936–943 (LLRCRVLT), 962–966 (DVGGQ), and 1031–1034 (NKQD). Arginine 940 is modified (ADP-ribosylarginine; by cholera toxin). Threonine 943 contributes to the Mg(2+) binding site. The segment at 958–967 (FHMFDVGGQR) is G3 motif. The segment at 1027–1034 (ILFLNKQD) is G4 motif. The residue at position 1091 (serine 1091) is a Phosphoserine. The interval 1103–1108 (TCAVDT) is G5 motif. Alanine 1105 serves as a coordination point for GTP.

Belongs to the G-alpha family. G(s) subfamily. In terms of assembly, g proteins are composed of 3 units; alpha, beta and gamma. The alpha chain contains the guanine nucleotide binding site. Interacts through its N-terminal region with ALEX which is produced from the same locus in a different open reading frame. This interaction may inhibit its adenylyl cyclase-stimulating activity. Interacts with MAGED2.

It is found in the cell membrane. The protein resides in the apical cell membrane. The enzyme catalyses GTP + H2O = GDP + phosphate + H(+). In terms of biological role, guanine nucleotide-binding proteins (G proteins) function as transducers in numerous signaling pathways controlled by G protein-coupled receptors (GPCRs). The alpha chain contains the guanine nucleotide binding site and alternates between an active, GTP-bound state and an inactive, GDP-bound state. Signaling by an activated GPCR promotes GDP release and GTP binding. The alpha subunit has a low GTPase activity that converts bound GTP to GDP, thereby terminating the signal. Both GDP release and GTP hydrolysis are modulated by numerous regulatory proteins. Signaling involves the activation of adenylyl cyclases, resulting in increased levels of the signaling molecule cAMP. GNAS functions downstream of several GPCRs, including beta-adrenergic receptors. XLas isoforms interact with the same set of receptors as Gnas isoforms. The protein is Guanine nucleotide-binding protein G(s) subunit alpha isoforms XLas of Mus musculus (Mouse).